Here is a 69-residue protein sequence, read N- to C-terminus: Conotoxin Eb6.9 (69 aa).

The first 17 residues, 1 to 17 (VLIIAVLFLTACQLTTA), serve as a signal peptide directing secretion. A propeptide spanning residues 18–41 (ETYSRGRQKHRARRSTDKNSKWTR) is cleaved from the precursor. 3 disulfide bridges follow: C43-C57, C50-C61, and C56-C68.

It belongs to the conotoxin O1 superfamily. In terms of tissue distribution, expressed by the venom duct.

The protein resides in the secreted. The polypeptide is Conotoxin Eb6.9 (E1) (Conus ebraeus (Hebrew cone)).